Reading from the N-terminus, the 21-residue chain is Protein IroK (21 aa).

In terms of biological role, possible increased expression of this protein (due to mutations upstream of the start codon) is proposed to be responsible for resistance to 3-hydroxypropionic acid (3-HP). In Escherichia coli (strain K12), this protein is Protein IroK (iroK).